Consider the following 466-residue polypeptide: Chromosomal replication initiator protein DnaA (466 aa).

Residues 1–77 are domain I, interacts with DnaA modulators; it reads MSQEIWADVL…GAEHPQVEFQ (77 aa). The tract at residues 77-121 is domain II; that stretch reads QVLPAAQDALLLPNDPPPAPEAAAPTPKTKAAPTPPPSTPGDNRK. Positions 87 to 122 are disordered; it reads LLPNDPPPAPEAAAPTPKTKAAPTPPPSTPGDNRKT. A compositionally biased stretch (low complexity) spans 97 to 108; the sequence is EAAAPTPKTKAA. Positions 122–338 are domain III, AAA+ region; the sequence is TLNPKYTFEN…GALMRVVAFA (217 aa). 4 residues coordinate ATP: G166, G168, K169, and T170. Residues 339–466 are domain IV, binds dsDNA; that stretch reads SLNNVPFSRA…GKEEEEEVGA (128 aa).

It belongs to the DnaA family. In terms of assembly, oligomerizes as a right-handed, spiral filament on DNA at oriC.

It is found in the cytoplasm. In terms of biological role, plays an essential role in the initiation and regulation of chromosomal replication. ATP-DnaA binds to the origin of replication (oriC) to initiate formation of the DNA replication initiation complex once per cell cycle. Binds the DnaA box (a 9 base pair repeat at the origin) and separates the double-stranded (ds)DNA. Forms a right-handed helical filament on oriC DNA; dsDNA binds to the exterior of the filament while single-stranded (ss)DNA is stabiized in the filament's interior. The ATP-DnaA-oriC complex binds and stabilizes one strand of the AT-rich DNA unwinding element (DUE), permitting loading of DNA polymerase. After initiation quickly degrades to an ADP-DnaA complex that is not apt for DNA replication. Binds acidic phospholipids. Functionally, strand separation requires the DnaA boxes and adjacent DnaA-trio motifs but works equally well with ADP or ATP. This is Chromosomal replication initiator protein DnaA from Deinococcus radiodurans (strain ATCC 13939 / DSM 20539 / JCM 16871 / CCUG 27074 / LMG 4051 / NBRC 15346 / NCIMB 9279 / VKM B-1422 / R1).